The following is a 288-amino-acid chain: Probable ketoamine kinase SAOUHSC_02908 (288 aa).

ATP is bound at residue 86–88 (TYL). The active-site Proton acceptor is the Asp-191.

It belongs to the fructosamine kinase family.

It carries out the reaction N(6)-(D-ribulosyl)-L-lysine + ATP = N(6)-(3-O-phospho-D-ribulosyl)-L-lysine + ADP + H(+). The enzyme catalyses N(6)-(D-erythrulosyl)-L-lysine + ATP = N(6)-(3-O-phospho-D-erythrulosyl)-L-lysine + ADP + H(+). It catalyses the reaction N(6)-D-ribulosyl-L-lysyl-[protein] + ATP = N(6)-(3-O-phospho-D-ribulosyl)-L-lysyl-[protein] + ADP + H(+). The catalysed reaction is N(6)-(D-erythrulosyl)-L-lysyl-[protein] + ATP = N(6)-(3-O-phospho-D-erythrulosyl)-L-lysyl-[protein] + ADP + H(+). Its function is as follows. Ketoamine kinase that phosphorylates ketoamines, such as erythruloselysine and ribuloselysine, on the third carbon of the sugar moiety to generate ketoamine 3-phosphate. Has higher activity on free lysine (erythruloselysine and ribuloselysine), than on ribuloselysine and erythruloselysine residues on glycated proteins. This Staphylococcus aureus (strain NCTC 8325 / PS 47) protein is Probable ketoamine kinase SAOUHSC_02908.